Reading from the N-terminus, the 80-residue chain is Putative ankyrin repeat protein RC0877 (80 aa).

The ANK repeat unit spans residues 6 to 46 (SGGIPLHAVAKNVRCTSKDIKDYEIYKLLVSYGADINARVE).

The sequence is that of Putative ankyrin repeat protein RC0877 from Rickettsia conorii (strain ATCC VR-613 / Malish 7).